Reading from the N-terminus, the 186-residue chain is GMP synthase [glutamine-hydrolyzing] subunit A (186 aa).

Residues 3–186 (MILIINNHGQ…FENFYDVCRS (184 aa)) enclose the Glutamine amidotransferase type-1 domain. Cys-77 serves as the catalytic Nucleophile. Residues His-164 and Glu-166 contribute to the active site.

As to quaternary structure, heterodimer composed of a glutamine amidotransferase subunit (A) and a GMP-binding subunit (B).

It catalyses the reaction XMP + L-glutamine + ATP + H2O = GMP + L-glutamate + AMP + diphosphate + 2 H(+). The protein operates within purine metabolism; GMP biosynthesis; GMP from XMP (L-Gln route): step 1/1. Catalyzes the synthesis of GMP from XMP. In Methanothermobacter thermautotrophicus (strain ATCC 29096 / DSM 1053 / JCM 10044 / NBRC 100330 / Delta H) (Methanobacterium thermoautotrophicum), this protein is GMP synthase [glutamine-hydrolyzing] subunit A.